Consider the following 446-residue polypeptide: Exodeoxyribonuclease 7 large subunit (446 aa).

The protein belongs to the XseA family. Heterooligomer composed of large and small subunits.

It is found in the cytoplasm. The enzyme catalyses Exonucleolytic cleavage in either 5'- to 3'- or 3'- to 5'-direction to yield nucleoside 5'-phosphates.. Functionally, bidirectionally degrades single-stranded DNA into large acid-insoluble oligonucleotides, which are then degraded further into small acid-soluble oligonucleotides. The protein is Exodeoxyribonuclease 7 large subunit of Vibrio cholerae serotype O1 (strain ATCC 39315 / El Tor Inaba N16961).